The sequence spans 214 residues: Cytochrome c biogenesis ATP-binding export protein CcmA (214 aa).

The region spanning 4–214 is the ABC transporter domain; that stretch reads LAVDQLTVSR…FDHGFDGAFL (211 aa). 36-43 serves as a coordination point for ATP; that stretch reads GPNGIGKT.

It belongs to the ABC transporter superfamily. CcmA exporter (TC 3.A.1.107) family. The complex is composed of two ATP-binding proteins (CcmA) and two transmembrane proteins (CcmB).

The protein localises to the cell inner membrane. The catalysed reaction is heme b(in) + ATP + H2O = heme b(out) + ADP + phosphate + H(+). In terms of biological role, part of the ABC transporter complex CcmAB involved in the biogenesis of c-type cytochromes; once thought to export heme, this seems not to be the case, but its exact role is uncertain. Responsible for energy coupling to the transport system. This is Cytochrome c biogenesis ATP-binding export protein CcmA from Rhodobacter capsulatus (strain ATCC BAA-309 / NBRC 16581 / SB1003).